A 951-amino-acid polypeptide reads, in one-letter code: Cation channel sperm-associated auxiliary subunit epsilon (951 aa).

Positions 1 to 19 (MSAREVAVLLLWLSCYGSA) are cleaved as a signal peptide. Topologically, residues 20-903 (LWRYSTNSPN…ETFGLIPSPS (884 aa)) are extracellular. Disulfide bonds link cysteine 57–cysteine 71, cysteine 101–cysteine 206, cysteine 246–cysteine 336, and cysteine 410–cysteine 413. 2 N-linked (GlcNAc...) asparagine glycosylation sites follow: asparagine 61 and asparagine 114. N-linked (GlcNAc...) asparagine glycans are attached at residues asparagine 414, asparagine 472, asparagine 487, asparagine 493, and asparagine 535. Intrachain disulfides connect cysteine 583-cysteine 690, cysteine 703-cysteine 885, cysteine 719-cysteine 752, and cysteine 804-cysteine 835. Asparagine 796 carries an N-linked (GlcNAc...) asparagine glycan. Residues asparagine 854, asparagine 881, and asparagine 886 are each glycosylated (N-linked (GlcNAc...) asparagine). The chain crosses the membrane as a helical span at residues 904 to 924 (VYLVASFLFVLMLLFFTILVL). Over 925–951 (SYFRYMRIYRRYIYEPLHKPQRKRKKN) the chain is Cytoplasmic.

Belongs to the CATSPERD family. As to quaternary structure, component of the CatSper complex or CatSpermasome composed of the core pore-forming members CATSPER1, CATSPER2, CATSPER3 and CATSPER4 as well as auxiliary members CATSPERB, CATSPERG, CATSPERD, CATSPERE, CATSPERZ, C2CD6/CATSPERT, TMEM249, TMEM262 and EFCAB9. HSPA1 may be an additional auxiliary complex member. The core complex members CATSPER1, CATSPER2, CATSPER3 and CATSPER4 form a heterotetrameric channel. The auxiliary CATSPERB, CATSPERG, CATSPERD and CATSPERE subunits form a pavilion-like structure over the pore which stabilizes the complex through interactions with CATSPER4, CATSPER3, CATSPER1 and CATSPER2 respectively. TMEM262/CATSPERH interacts with CATSPERB, further stabilizing the complex. C2CD6/CATSPERT interacts at least with CATSPERD and is required for targeting the CatSper complex in the flagellar membrane.

The protein resides in the cell projection. It localises to the cilium. The protein localises to the flagellum membrane. Auxiliary component of the CatSper complex, a complex involved in sperm cell hyperactivation. Sperm cell hyperactivation is needed for sperm motility which is essential late in the preparation of sperm for fertilization. The polypeptide is Cation channel sperm-associated auxiliary subunit epsilon (Homo sapiens (Human)).